A 274-amino-acid chain; its full sequence is Triosephosphate isomerase (274 aa).

31-33 (NWK) is a binding site for substrate. The Electrophile role is filled by His-118. Residue Glu-188 is the Proton acceptor of the active site. Substrate is bound by residues Gly-194, Ser-234, and 255 to 256 (GG).

It belongs to the triosephosphate isomerase family. As to quaternary structure, homodimer.

It is found in the cytoplasm. The enzyme catalyses D-glyceraldehyde 3-phosphate = dihydroxyacetone phosphate. It functions in the pathway carbohydrate biosynthesis; gluconeogenesis. Its pathway is carbohydrate degradation; glycolysis; D-glyceraldehyde 3-phosphate from glycerone phosphate: step 1/1. Involved in the gluconeogenesis. Catalyzes stereospecifically the conversion of dihydroxyacetone phosphate (DHAP) to D-glyceraldehyde-3-phosphate (G3P). The sequence is that of Triosephosphate isomerase from Chlamydia trachomatis serovar L2 (strain ATCC VR-902B / DSM 19102 / 434/Bu).